The chain runs to 858 residues: DNA mismatch repair protein MutS (858 aa).

600-607 (GPNMSGKS) contacts ATP.

This sequence belongs to the DNA mismatch repair MutS family.

This protein is involved in the repair of mismatches in DNA. It is possible that it carries out the mismatch recognition step. This protein has a weak ATPase activity. This is DNA mismatch repair protein MutS from Bacillus pumilus (strain SAFR-032).